The following is a 295-amino-acid chain: Glutamate-binding protein GluB (295 aa).

The signal sequence occupies residues 1–26 (MSAKRTFTRIGAILGATALAGVTLTA). Residue Cys27 is the site of N-palmitoyl cysteine attachment. A lipid anchor (S-diacylglycerol cysteine) is attached at Cys27.

This sequence belongs to the bacterial solute-binding protein 3 family. In terms of assembly, the complex is composed of two ATP-binding proteins (GluA), two transmembrane proteins (GluC and GluD) and a solute-binding protein (GluB).

It localises to the cell membrane. Binding of glutamate or asparatate induces a higher thermal stability of the protein structure. Functionally, part of the ABC transporter complex GluABCD involved in glutamate uptake. Binds glutamate with a high affinity. Also binds aspartate with high affinity, suggesting that GluB could be involved in the transport of both amino acid residues into the cell. The polypeptide is Glutamate-binding protein GluB (Corynebacterium glutamicum (strain ATCC 13032 / DSM 20300 / JCM 1318 / BCRC 11384 / CCUG 27702 / LMG 3730 / NBRC 12168 / NCIMB 10025 / NRRL B-2784 / 534)).